The following is a 442-amino-acid chain: MVHIKKGELTQEEKELLEVIGKGTVQEAGTLLGSKNVRVNCLDENGMTPLMHAAYKGKLDMCKLLLRHGADVNCHQHEHGYTALMFAALSGNKDITWVMLEAGAETDVVNSVGRTAAQMAAFVGQHDCVTIINNFFPREKLDYYTKPQGLDKEPKLPPKLAGPLHKIITTTNLHPVKIVMLINENPLLAEEAALNKCYKVMDLICEKCMKQRDMNEVLAMKMHYISCIFQKCINFLKDRENKLDTLIKSLLKGRASDGFPVYQEKIIRESIRKFPYCEATLLQQLVRSIAPVEIGSDPTAFSVLTQAITGQVGFVDVEFCTTCGEKGASKRCSVCKMVIYCDQTCQKTHWFAHKKICKNLKDIYEKQQLEAAKAKSEEENNSKLDVNSNCVGEERLEEAETRICQKNDNPKDSEEGEKESLQSDAGLEGLQEAAVGPQVSEE.

ANK repeat units lie at residues 45-74 (NGMT…DVNC), 79-108 (HGYT…ETDV), and 159-188 (KLAG…NPLL). Zn(2+) contacts are provided by Cys-320, Cys-323, Cys-332, Cys-335, Cys-341, Cys-345, His-353, and Cys-357. The segment at 320–357 (CTTCGEKGASKRCSVCKMVIYCDQTCQKTHWFAHKKIC) adopts an MYND-type zinc-finger fold. A compositionally biased stretch (basic and acidic residues) spans 401–421 (TRICQKNDNPKDSEEGEKESL). Positions 401–442 (TRICQKNDNPKDSEEGEKESLQSDAGLEGLQEAAVGPQVSEE) are disordered.

Interacts with the retinal-specific guanylyl cyclase GC1.

Its subcellular location is the cell projection. It localises to the cilium. Its function is as follows. May be involved in the trafficking of signaling proteins to the cilia. In Bos taurus (Bovine), this protein is Ankyrin repeat and MYND domain-containing protein 2 (ANKMY2).